Consider the following 521-residue polypeptide: Glutamate--cysteine ligase (521 aa).

The protein belongs to the glutamate--cysteine ligase type 1 family. Type 1 subfamily.

It catalyses the reaction L-cysteine + L-glutamate + ATP = gamma-L-glutamyl-L-cysteine + ADP + phosphate + H(+). The protein operates within sulfur metabolism; glutathione biosynthesis; glutathione from L-cysteine and L-glutamate: step 1/2. The protein is Glutamate--cysteine ligase of Aliivibrio salmonicida (strain LFI1238) (Vibrio salmonicida (strain LFI1238)).